The following is a 498-amino-acid chain: Elastase (498 aa).

An N-terminal signal peptide occupies residues 1 to 23; that stretch reads MKKVSTLDLLFVAIMGVSPAAFA. Residues 24 to 197 constitute a propeptide that is removed on maturation; that stretch reads ADLIDVSKLP…VLDQWEGLAH (174 aa). Residues Cys227 and Cys255 are joined by a disulfide bond. Thr236 carries the phosphothreonine modification. Asp333 serves as a coordination point for Ca(2+). His337 contributes to the Zn(2+) binding site. Glu338 is a catalytic residue. Residues His341 and Glu361 each contribute to the Zn(2+) site. The Ca(2+) site is built by Glu369, Glu372, Asp380, and Leu382. His420 functions as the Proton donor in the catalytic mechanism. A disulfide bond links Cys467 and Cys494.

This sequence belongs to the peptidase M4 family. Ca(2+) is required as a cofactor. It depends on Zn(2+) as a cofactor. Post-translationally, made as a pre-pro-protein which is exported to the periplasm. Probably autocatalyzes cleavage of its pro-peptide. The pro-peptide can be secreted with mature elastase.

The protein localises to the secreted. It carries out the reaction Hydrolysis of proteins including elastin, collagen types III and IV, fibronectin and immunoglobulin A, generally with bulky hydrophobic group at P1'. Insulin B chain cleavage pattern identical to that of thermolysin, but specificity differs in other respects.. Cleaves host elastase, collagen, IgI and several complement components as well as endogenous pro-aminopeptidase, pro-chitin-binding protein (cbpD). Cleaves its own pro-peptide. Involved in the pathogenesis of P.aeruginosa infections. The polypeptide is Elastase (lasB) (Pseudomonas aeruginosa (strain UCBPP-PA14)).